Here is a 446-residue protein sequence, read N- to C-terminus: D(1A) dopamine receptor (446 aa).

The Extracellular portion of the chain corresponds to 1–22; that stretch reads MAPNTSTMDETGLPVERDFSFR. N-linked (GlcNAc...) asparagine glycosylation is present at Asn4. The chain crosses the membrane as a helical span at residues 23–48; the sequence is ILTACFLSLLILSTLLGNTLVCAAVI. Residues 49–59 lie on the Cytoplasmic side of the membrane; that stretch reads RFRHLRSKVTN. Residues 60–86 traverse the membrane as a helical segment; that stretch reads FFVISLAVSDLLVAVLVMPWKAVAEIA. The Extracellular portion of the chain corresponds to 87–95; that stretch reads GFWPFGSFC. Cys95 and Cys186 are oxidised to a cystine. The chain crosses the membrane as a helical span at residues 96-118; sequence NIWVAFDIMCSTASILNLCVISV. Residues 119–137 lie on the Cytoplasmic side of the membrane; the sequence is DRYWAISSPFQYERKMTPK. The chain crosses the membrane as a helical span at residues 138–162; that stretch reads AAFILISVAWTLSVLISFIPVQLSW. Topologically, residues 163 to 192 are extracellular; sequence HKAKPTWPLDGNFTSLEDAEDDNCDTRLSR. Residues 193–218 traverse the membrane as a helical segment; the sequence is TYAISSSLISFYIPVAIMIVTYTSIY. Over 219–272 the chain is Cytoplasmic; it reads RIAQKQIRRISALERAAVHAKNCQTTTGNGNPVECSQSESSFKMSFKRETKVLK. A helical transmembrane segment spans residues 273–299; that stretch reads TLSVIMGVFVCCWLPFFISNCMVPFCG. The Extracellular segment spans residues 300–312; sequence SEETQPFCIDSIT. The chain crosses the membrane as a helical span at residues 313 to 337; it reads FDVFVWFGWANSSLNPIIYAFNADF. Residues 338-446 are Cytoplasmic-facing; that stretch reads QKAFSTLLGC…PVTHSGQHST (109 aa). Residues Cys347 and Cys351 are each lipidated (S-palmitoyl cysteine). Phosphoserine is present on Ser441.

This sequence belongs to the G-protein coupled receptor 1 family. As to quaternary structure, interacts with DNAJC14 via its C-terminus. Interacts with DRD2. Interacts with DORIP1.

The protein localises to the cell membrane. It localises to the endoplasmic reticulum membrane. It is found in the cell projection. The protein resides in the cilium membrane. Its subcellular location is the dendrite. The protein localises to the dendritic spine. In terms of biological role, dopamine receptor whose activity is mediated by G proteins which activate adenylyl cyclase. This Mus musculus (Mouse) protein is D(1A) dopamine receptor (Drd1).